The primary structure comprises 108 residues: CRISPR-associated endoribonuclease Cas2 (108 aa).

Residue aspartate 15 participates in Mg(2+) binding.

The protein belongs to the CRISPR-associated endoribonuclease Cas2 protein family. As to quaternary structure, homodimer, forms a heterotetramer with a Cas1 homodimer. Requires Mg(2+) as cofactor.

Functionally, CRISPR (clustered regularly interspaced short palindromic repeat), is an adaptive immune system that provides protection against mobile genetic elements (viruses, transposable elements and conjugative plasmids). CRISPR clusters contain sequences complementary to antecedent mobile elements and target invading nucleic acids. CRISPR clusters are transcribed and processed into CRISPR RNA (crRNA). Functions as a ssRNA-specific endoribonuclease. Involved in the integration of spacer DNA into the CRISPR cassette. The polypeptide is CRISPR-associated endoribonuclease Cas2 (Paracidovorax avenae (strain ATCC 19860 / DSM 7227 / CCUG 15838 / JCM 20985 / LMG 2117 / NCPPB 1011) (Acidovorax avenae)).